A 409-amino-acid chain; its full sequence is tRNA(Met) cytidine acetate ligase (409 aa).

ATP is bound by residues 7-20 (VVEY…HLYH), G102, N169, and R194.

This sequence belongs to the TmcAL family.

Its subcellular location is the cytoplasm. It catalyses the reaction cytidine(34) in elongator tRNA(Met) + acetate + ATP = N(4)-acetylcytidine(34) in elongator tRNA(Met) + AMP + diphosphate. Catalyzes the formation of N(4)-acetylcytidine (ac(4)C) at the wobble position of elongator tRNA(Met), using acetate and ATP as substrates. First activates an acetate ion to form acetyladenylate (Ac-AMP) and then transfers the acetyl group to tRNA to form ac(4)C34. The protein is tRNA(Met) cytidine acetate ligase of Clostridium botulinum (strain Okra / Type B1).